The primary structure comprises 193 residues: Ribosome maturation factor RimM (193 aa).

The 74-residue stretch at 100–173 folds into the PRC barrel domain; the sequence is DDEFYYADLE…TLLIDPLAAG (74 aa).

Belongs to the RimM family. As to quaternary structure, binds ribosomal protein uS19.

It is found in the cytoplasm. In terms of biological role, an accessory protein needed during the final step in the assembly of 30S ribosomal subunit, possibly for assembly of the head region. Essential for efficient processing of 16S rRNA. May be needed both before and after RbfA during the maturation of 16S rRNA. It has affinity for free ribosomal 30S subunits but not for 70S ribosomes. This Rhizobium etli (strain CIAT 652) protein is Ribosome maturation factor RimM.